The sequence spans 834 residues: DNA-directed RNA polymerase subunit beta' (834 aa).

A compositionally biased stretch (polar residues) spans 1–22; that stretch reads MTYSNKPTGSSLRSSRNSTLEP. A disordered region spans residues 1–45; it reads MTYSNKPTGSSLRSSRNSTLEPQSLVHREESKRQEGPKGQNLRIG. A compositionally biased stretch (basic and acidic residues) spans 26–36; the sequence is VHREESKRQEG. Positions 101, 103, 118, and 121 each coordinate Zn(2+). Residues aspartate 606, aspartate 608, and aspartate 610 each coordinate Mg(2+).

It belongs to the RNA polymerase beta' chain family. RpoC1 subfamily. In plastids the minimal PEP RNA polymerase catalytic core is composed of four subunits: alpha, beta, beta', and beta''. When a (nuclear-encoded) sigma factor is associated with the core the holoenzyme is formed, which can initiate transcription. Mg(2+) serves as cofactor. Requires Zn(2+) as cofactor.

The protein resides in the plastid. It localises to the chloroplast. It carries out the reaction RNA(n) + a ribonucleoside 5'-triphosphate = RNA(n+1) + diphosphate. DNA-dependent RNA polymerase catalyzes the transcription of DNA into RNA using the four ribonucleoside triphosphates as substrates. This is DNA-directed RNA polymerase subunit beta' from Staurastrum punctulatum (Green alga).